A 99-amino-acid chain; its full sequence is Small ribosomal subunit protein uS14m (99 aa).

The protein belongs to the universal ribosomal protein uS14 family.

The protein localises to the mitochondrion. The chain is Small ribosomal subunit protein uS14m (RPS14) from Prototheca wickerhamii.